The primary structure comprises 147 residues: UPF0735 ACT domain-containing protein BPUM_2431 (147 aa).

The 76-residue stretch at 70–145 folds into the ACT domain; sequence TLFFHLEDRS…FVEKVEILGS (76 aa).

The protein belongs to the UPF0735 family.

The sequence is that of UPF0735 ACT domain-containing protein BPUM_2431 from Bacillus pumilus (strain SAFR-032).